Reading from the N-terminus, the 145-residue chain is Arginine repressor (145 aa).

The protein belongs to the ArgR family.

It is found in the cytoplasm. It functions in the pathway amino-acid biosynthesis; L-arginine biosynthesis [regulation]. Regulates arginine biosynthesis genes. This is Arginine repressor from Streptococcus mutans serotype c (strain ATCC 700610 / UA159).